The chain runs to 510 residues: MKAVFKVTTALLACVFIARYLVCQQNGLGSFATDLQPICRHTEFSVGSLFDSKLVEGSAVSDYLVGKYSQSIKPLIERYPNSSLKRIMGYFYRFWYNIFSFLRLNELCCSLHSKLGPLLNHLRIAWYYLKPYTDNVKNVLENPFNSSTDWMKYGSFSADGTLTKPIFETDSETEDYEDDENENEDEDEDEDEDDVGIEDENKEYEFDGVQDGHGNSQLVTAAILQDLSKIIIGSNSHAELETYEAESLKMEYEAWIKAIDSKIHSAMALLDSEIQSVFEAEVQNKSIEITRNLDDLNTTVNEQLVFLDSKIKDINCTSKFDPVQNKIKYFDESGQVELEAYITKSSITSILKNYKIHLLDFEKSLFHSLDSFLTEMAKLAESIRLENVEVYEEWGDVMISQWSQRMAYMDVRGLHLEDQYDPAYIEENHSNWLRFMELKKKVISERNRLVKHDLDMTLILEWITKLKADFQNTKNNIQDTFLQRMNTADTLFKNRELKEQLEEEFVRQEH.

Positions Met-1–Cys-23 are cleaved as a signal peptide. The interval Phe-167 to Val-195 is disordered. The span at Thr-169–Val-195 shows a compositional bias: acidic residues. Phosphotyrosine is present on Tyr-354.

This sequence belongs to the OSW/SHE family.

Functionally, involved in spore wall assembly. This is Outer spore wall protein 7 from Saccharomyces cerevisiae (strain ATCC 204508 / S288c) (Baker's yeast).